We begin with the raw amino-acid sequence, 254 residues long: MWHLLPPSALLLLISSVTKAADPSKAVVLLDPPWVRVLTDDNVTLTCQGAYPPENNNTRWFHNGTHIVGSQAPSYLISGIKVENSGKYQCQTDLSPLSDSVQLQVHADWLVLQTSKWVFQKGESIRLRCHSWKNKRLYKVTYLQNGKPKKFFHNNSEFHIPEATVNHTGSYYCRGLIGHNNKSSGIVAITFQADFAGPSIAPLFPLWQQIAFCLMMGLLFAVDTGLYFFVRRDLRRSMVHKEEYNFKWSQAQDK.

The first 20 residues, 1-20 (MWHLLPPSALLLLISSVTKA), serve as a signal peptide directing secretion. Topologically, residues 21–209 (ADPSKAVVLL…IAPLFPLWQQ (189 aa)) are extracellular. Ig-like C2-type domains are found at residues 23-104 (PSKA…VQLQ) and 121-174 (KGES…YYCR). Residues N42, N63, N166, and N181 are each glycosylated (N-linked (GlcNAc...) asparagine). 2 cysteine pairs are disulfide-bonded: C47/C90 and C129/C173. The chain crosses the membrane as a helical span at residues 210–230 (IAFCLMMGLLFAVDTGLYFFV). Topologically, residues 231 to 254 (RRDLRRSMVHKEEYNFKWSQAQDK) are cytoplasmic.

In terms of assembly, forms a heterooligomeric complex with ITAM-containing signaling subunits FCER1G. Interacts (via transmembrane domain) with signaling subunits; this interaction is a prerequisite for receptor complex expression on the cell surface and intracellular signal transduction. Binds the Fc region of antigen-complexed IgG. N-glycosylated. In terms of processing, phosphorylated following receptor ligation.

Its subcellular location is the cell membrane. Its function is as follows. Receptor for the invariable Fc fragment of immunoglobulin gamma (IgG). Binds with intermediate affinity to both IgG2a and IgG2b. Can bind to IgG2a and IgG2b monomers. Does not display binding to IgG1 or IgG3. Recognizes neutralizing virus-specific IgGs displayed on the cell surface of infected cells and triggers antibody-dependent cellular cytotoxicity (ADCC). Confers protection to lethal influenza virus infection. On splenic dendritic cells, uptakes antigen immune complexes and efficiently divert them into MHC class I and II antigen presentation pathways to provide for superior priming of CD4-positive and CD8-positive T cell immune responses. Mediates neutrophil activation by IgG complexes redundantly with FCGR2A. Plays a role in promoting bone resorption by enhancing osteoclast differentiation following binding to IgG2a. Also acts as a receptor for the Fc region of immunoglobulin epsilon (IgE). Binds with low affinity to both the a and b allotypes of IgE. Has also been shown to bind to IgE allotype a only but not to allotype b. Binds aggregated IgE but not the monomeric form and bound monomeric IgG is readily displaced by IgE complexes. Binding to IgE promotes macrophage-mediated phagocytosis, antigen presentation to T cells, production of pro-inflammatory cytokines and the late phase of cutaneous allergic reactions. Mediates enhanced ADCC in response to afucosylated IgGs. The polypeptide is Low affinity immunoglobulin gamma Fc region receptor III-A (Cavia porcellus (Guinea pig)).